The following is a 1085-amino-acid chain: Protein CROWDED NUCLEI 3 (1085 aa).

2 coiled-coil regions span residues 51–149 (DEAS…NDLK) and 185–695 (RERA…LDVL). Residue Lys-318 forms a Glycyl lysine isopeptide (Lys-Gly) (interchain with G-Cter in ubiquitin) linkage. Residues 404–411 (AKREAALE) carry the Nuclear localization signal motif. Residue Lys-661 forms a Glycyl lysine isopeptide (Lys-Gly) (interchain with G-Cter in ubiquitin) linkage. Residues Ser-764, Ser-787, Ser-825, and Ser-843 each carry the phosphoserine modification. 2 disordered regions span residues 801–997 (TVKL…GKAE) and 1020–1077 (NNTG…SIGK). A compositionally biased stretch (basic and acidic residues) spans 813–825 (SLDRVSGEDHEPS). Over residues 854–868 (RRGRGRGRGRGKSVR) the composition is skewed to basic residues. A compositionally biased stretch (basic and acidic residues) spans 877 to 897 (VSRDSKPSDGETPRKRQREQT). Position 910 is a phosphoserine (Ser-910). Residues 932-941 (VSQTPGQTRY) show a composition bias toward polar residues. Residues 949–995 (VGTEEDKAQASKGATEKQERVNDDIRKVPSPKETRTPPEGENRENGK) show a composition bias toward basic and acidic residues. Acidic residues predominate over residues 1045 to 1066 (EEDDENISMIEEENEGEEEEET).

This sequence belongs to the CRWN family. In terms of assembly, core component of the LINC complex which is composed of inner nuclear membrane SUN domain-containing proteins coupled to outer nuclear membrane WIP proteins, the nucleoskeletal CRWN/LINC proteins, and, possibly, KAKU4. In terms of tissue distribution, expressed at low levels in roots, leaves, flowers and flower stalks.

The protein localises to the nucleus membrane. Its subcellular location is the nucleus. The protein resides in the nucleoplasm. It localises to the cytoplasm. It is found in the nucleus lamina. Functionally, component of SUN-protein-containing multivariate complexes also called LINC complexes which link the nucleoskeleton and cytoskeleton by providing versatile outer nuclear membrane attachment sites for cytoskeletal filaments. Required for nucleus structure organization (e.g. size and shape). This is Protein CROWDED NUCLEI 3 from Arabidopsis thaliana (Mouse-ear cress).